The primary structure comprises 585 residues: YTH domain-containing family protein 3 (585 aa).

Disordered regions lie at residues 1 to 51, 244 to 277, and 304 to 350; these read MSAT…SYPP, KPAK…MNIG, and PQPL…QPQL. Serine 2 carries the N-acetylserine modification. Over residues 15–24 the composition is skewed to polar residues; the sequence is NKVSVQNGSI. Serine 23 bears the Phosphoserine mark. Over residues 244 to 254 the composition is skewed to basic residues; the sequence is KPAKPQPKLKP. Over residues 329–350 the composition is skewed to low complexity; that stretch reads QQQQGPQPQAQPHQVQSQQPQL. The region spanning 416-550 is the YTH domain; the sequence is GRVFIIKSYS…EKAKQVLKII (135 aa). Residues 422–424, aspartate 428, 438–439, asparagine 468, tryptophan 492, and tryptophan 497 contribute to the RNA site; these read KSY and WC.

This sequence belongs to the YTHDF family. YTHDF3 subfamily. As to quaternary structure, interacts with CNOT1; promoting recruitment of the CCR4-NOT complex. Interacts with YTHDF1. Interacts with YTHDF2. Interacts with PAN3.

The protein localises to the cytoplasm. It is found in the cytosol. Its subcellular location is the P-body. The protein resides in the stress granule. Functionally, specifically recognizes and binds N6-methyladenosine (m6A)-containing RNAs, and regulates their stability. M6A is a modification present at internal sites of mRNAs and some non-coding RNAs and plays a role in mRNA stability and processing. Acts as a regulator of mRNA stability by promoting degradation of m6A-containing mRNAs via interaction with the CCR4-NOT complex or PAN3. The YTHDF paralogs (YTHDF1, YTHDF2 and YTHDF3) share m6A-containing mRNAs targets and act redundantly to mediate mRNA degradation and cellular differentiation. Acts as a negative regulator of type I interferon response by down-regulating interferon-stimulated genes (ISGs) expression: acts by binding to FOXO3 mRNAs. Binds to FOXO3 mRNAs independently of METTL3-mediated m6A modification. Can also act as a regulator of mRNA stability in cooperation with YTHDF2 by binding to m6A-containing mRNA and promoting their degradation. Recognizes and binds m6A-containing circular RNAs (circRNAs); circRNAs are generated through back-splicing of pre-mRNAs, a non-canonical splicing process promoted by dsRNA structures across circularizing exons. Promotes formation of phase-separated membraneless compartments, such as P-bodies or stress granules, by undergoing liquid-liquid phase separation upon binding to mRNAs containing multiple m6A-modified residues: polymethylated mRNAs act as a multivalent scaffold for the binding of YTHDF proteins, juxtaposing their disordered regions and thereby leading to phase separation. The resulting mRNA-YTHDF complexes then partition into different endogenous phase-separated membraneless compartments, such as P-bodies, stress granules or neuronal RNA granules. May also recognize and bind N1-methyladenosine (m1A)-containing mRNAs: inhibits trophoblast invasion by binding to m1A-methylated transcripts of IGF1R, promoting their degradation. This chain is YTH domain-containing family protein 3, found in Mus musculus (Mouse).